We begin with the raw amino-acid sequence, 296 residues long: (3R)-3-[(carboxymethyl)amino]fatty acid oxygenase/decarboxylase (296 aa).

Residues Y66, Y71, and G98 each coordinate (3R)-3-[(carboxymethyl)amino]butanoate. 3 residues coordinate (3R)-3-{[carboxy(hydroxy)methyl]amino}butanoate: Y66, Y71, and G98. The Fe(2+) site is built by H102 and D104. Residues Y105 and K163 each coordinate (3R)-3-[(carboxymethyl)amino]butanoate. (3R)-3-{[carboxy(hydroxy)methyl]amino}butanoate contacts are provided by Y105 and K163. A Fe(2+)-binding site is contributed by H265. Position 269 (H269) interacts with 2-oxoglutarate. R280 lines the (3R)-3-[(carboxymethyl)amino]butanoate pocket. Residue R280 coordinates (3R)-3-{[carboxy(hydroxy)methyl]amino}butanoate.

It belongs to the TfdA dioxygenase family. Fe(2+) is required as a cofactor.

The enzyme catalyses a (3R)-3-[(carboxymethyl)amino]fatty acid + 2 2-oxoglutarate + 2 O2 = a (3R)-3-isocyanyl-fatty acid + 2 succinate + 3 CO2 + 2 H2O. It carries out the reaction a (3R)-3-[(carboxymethyl)amino]fatty acid + 2-oxoglutarate + O2 = a (3R)-3-{[carboxy(hydroxy)methyl]amino}fatty acid + succinate + CO2. It catalyses the reaction a (3R)-3-{[carboxy(hydroxy)methyl]amino}fatty acid + 2-oxoglutarate + O2 = a (3R)-3-isocyanyl-fatty acid + succinate + 2 CO2 + 2 H2O. The catalysed reaction is (3R)-3-[(carboxymethyl)amino]butanoate + 2 2-oxoglutarate + 2 O2 = (3R)-3-isocyanylbutanoate + 2 succinate + 3 CO2 + 2 H2O. The enzyme catalyses (3R)-3-[(carboxymethyl)amino]butanoate + 2-oxoglutarate + O2 = (3R)-3-{[carboxy(hydroxy)methyl]amino}butanoate + succinate + CO2. It carries out the reaction (3R)-3-{[carboxy(hydroxy)methyl]amino}butanoate + 2-oxoglutarate + O2 = (3R)-3-isocyanylbutanoate + succinate + 2 CO2 + 2 H2O. Its function is as follows. Involved in the biosynthesis of a unique class of isonitrile lipopeptides (INLPs). Catalyzes the conversion of (3R)-3-[(carboxymethyl)amino]fatty acids such as (3R)-3-[(carboxymethyl)amino]butanoate (CABA) to (3R)-3-isocyanylbutanoate (INBA) through an oxidative decarboxylation mechanism, thereby generating the isonitrile group of INLPs. The sequence is that of (3R)-3-[(carboxymethyl)amino]fatty acid oxygenase/decarboxylase from Streptomyces coeruleorubidus.